The primary structure comprises 319 residues: uncharacterized protein (319 aa).

Residues 281–319 are disordered; sequence KVERKQRRRDDQNIMRSKLPQQRQNPFCSTERPKRARCD. Polar residues predominate over residues 299–308; the sequence is LPQQRQNPFC.

It localises to the cytoplasm. Its subcellular location is the nucleus. This is an uncharacterized protein from Saccharomyces cerevisiae (strain ATCC 204508 / S288c) (Baker's yeast).